The chain runs to 784 residues: Toll-like receptor 2 (784 aa).

Residues 1-20 (MPHTLWMVWVLGVIISLSKE) form the signal peptide. Residues 21-587 (ESSNQASLSC…VRLSVSECHR (567 aa)) are Extracellular-facing. An intrachain disulfide couples Cys-30 to Cys-36. LRR repeat units follow at residues 54 to 77 (VKSL…RCVN), 78 to 101 (LQAL…SLGS), 102 to 125 (LEHL…PLSS), 126 to 150 (LTFL…HLTK), 151 to 175 (LQIL…GLTF), 176 to 199 (LEEL…SIQN), 200 to 223 (VSHL…VTSS), 224 to 250 (VECL…TNSL), 251 to 278 (IKKF…QISG), 279 to 308 (LLEL…DPGK), 309 to 337 (VETL…LTER), 338 to 361 (VKRI…HLKS), 362 to 388 (LEYL…AWPS), 389 to 414 (LQTL…TLKN), 415 to 437 (LTNV…WPEK), 438 to 457 (MKYL…CIPK), 458 to 478 (TLEI…NLPQ), 479 to 500 (LKEL…LLPM), and 501 to 524 (LLVL…SFHT). Asn-114 carries N-linked (GlcNAc...) asparagine glycosylation. Asn-199 carries an N-linked (GlcNAc...) asparagine glycan. A disulfide bond links Cys-353 and Cys-382. Asn-414 carries an N-linked (GlcNAc...) asparagine glycan. The cysteines at positions 432 and 454 are disulfide-linked. Asn-442 carries an N-linked (GlcNAc...) asparagine glycan. The LRRCT domain occupies 525–579 (LKTLEAGGNNFICSCEFLSFTQEQQALAKVLIDWPANYLCDSPSHVRGQQVQDVR). The chain crosses the membrane as a helical span at residues 588-608 (TALVSGMCCALFLLILLTGVL). The Cytoplasmic portion of the chain corresponds to 609–784 (CHRFHGLWYM…WVNLRAAIKS (176 aa)). One can recognise a TIR domain in the interval 639-782 (ICYDAFVSYS…GFWVNLRAAI (144 aa)). Lys-754 participates in a covalent cross-link: Glycyl lysine isopeptide (Lys-Gly) (interchain with G-Cter in ubiquitin). The ATG16L1-binding motif signature appears at 761 to 778 (YLEWPMDEAQREGFWVNL).

Belongs to the Toll-like receptor family. As to quaternary structure, interacts with LY96, TLR1 and TLR6 (via extracellular domain). TLR2 seems to exist in heterodimers with either TLR1 or TLR6 before stimulation by the ligand. The heterodimers form bigger oligomers in response to their corresponding ligands as well as further heterotypic associations with other receptors such as CD14 and/or CD36. Binds MYD88 (via TIR domain). Interacts with TICAM1. Interacts with CNPY3. Interacts with ATG16L1. Interacts with PPP1R11. Interacts with TICAM2. Interacts with TIRAP. Ubiquitinated at Lys-754 by PPP1R11, leading to its degradation. Deubiquitinated by USP2. In terms of processing, glycosylation of Asn-442 is critical for secretion of the N-terminal ectodomain of TLR2.

Its subcellular location is the membrane. It localises to the cytoplasmic vesicle. It is found in the phagosome membrane. The protein localises to the membrane raft. Functionally, cooperates with LY96 to mediate the innate immune response to bacterial lipoproteins and other microbial cell wall components. Cooperates with TLR1 or TLR6 to mediate the innate immune response to bacterial lipoproteins or lipopeptides. Acts via MYD88 and TRAF6, leading to NF-kappa-B activation, cytokine secretion and the inflammatory response. May also promote apoptosis in response to lipoproteins. Forms activation clusters composed of several receptors depending on the ligand, these clusters trigger signaling from the cell surface and subsequently are targeted to the Golgi in a lipid-raft dependent pathway. Forms the cluster TLR2:TLR6:CD14:CD36 in response to diacylated lipopeptides and TLR2:TLR1:CD14 in response to triacylated lipopeptides. The sequence is that of Toll-like receptor 2 (TLR2) from Pan troglodytes (Chimpanzee).